Here is a 336-residue protein sequence, read N- to C-terminus: Holliday junction branch migration complex subunit RuvB (336 aa).

The segment at 4–184 (ADRLISAGTT…FGIVQRLEFY (181 aa)) is large ATPase domain (RuvB-L). Residues Ile-23, Arg-24, Gly-65, Lys-68, Thr-69, Thr-70, 131–133 (EDY), Arg-174, Tyr-184, and Arg-221 contribute to the ATP site. Mg(2+) is bound at residue Thr-69. Positions 185–255 (QVPDLQYIVS…IAAQALDMLN (71 aa)) are small ATPAse domain (RuvB-S). The segment at 258-336 (AEGFDYMDRK…HFGITPPEMP (79 aa)) is head domain (RuvB-H). DNA is bound by residues Arg-294, Arg-313, and Arg-318.

Belongs to the RuvB family. As to quaternary structure, homohexamer. Forms an RuvA(8)-RuvB(12)-Holliday junction (HJ) complex. HJ DNA is sandwiched between 2 RuvA tetramers; dsDNA enters through RuvA and exits via RuvB. An RuvB hexamer assembles on each DNA strand where it exits the tetramer. Each RuvB hexamer is contacted by two RuvA subunits (via domain III) on 2 adjacent RuvB subunits; this complex drives branch migration. In the full resolvosome a probable DNA-RuvA(4)-RuvB(12)-RuvC(2) complex forms which resolves the HJ.

It is found in the cytoplasm. The catalysed reaction is ATP + H2O = ADP + phosphate + H(+). Functionally, the RuvA-RuvB-RuvC complex processes Holliday junction (HJ) DNA during genetic recombination and DNA repair, while the RuvA-RuvB complex plays an important role in the rescue of blocked DNA replication forks via replication fork reversal (RFR). RuvA specifically binds to HJ cruciform DNA, conferring on it an open structure. The RuvB hexamer acts as an ATP-dependent pump, pulling dsDNA into and through the RuvAB complex. RuvB forms 2 homohexamers on either side of HJ DNA bound by 1 or 2 RuvA tetramers; 4 subunits per hexamer contact DNA at a time. Coordinated motions by a converter formed by DNA-disengaged RuvB subunits stimulates ATP hydrolysis and nucleotide exchange. Immobilization of the converter enables RuvB to convert the ATP-contained energy into a lever motion, pulling 2 nucleotides of DNA out of the RuvA tetramer per ATP hydrolyzed, thus driving DNA branch migration. The RuvB motors rotate together with the DNA substrate, which together with the progressing nucleotide cycle form the mechanistic basis for DNA recombination by continuous HJ branch migration. Branch migration allows RuvC to scan DNA until it finds its consensus sequence, where it cleaves and resolves cruciform DNA. The sequence is that of Holliday junction branch migration complex subunit RuvB from Escherichia coli (strain ATCC 8739 / DSM 1576 / NBRC 3972 / NCIMB 8545 / WDCM 00012 / Crooks).